Here is a 98-residue protein sequence, read N- to C-terminus: Post-transcriptional regulator ComN (98 aa).

As to quaternary structure, interacts directly with DivIVA.

It is found in the cytoplasm. Functionally, required for post-transcription initiation control of the comE operon. Promotes the accumulation of its target comE mRNA to septal and polar sites. In Bacillus subtilis (strain 168), this protein is Post-transcriptional regulator ComN (comN).